We begin with the raw amino-acid sequence, 620 residues long: Glutathione-regulated potassium-efflux system protein KefC (620 aa).

At 1-3 (MDS) the chain is on the periplasmic side. Residues 4-24 (HTLVQALIYLGSAALIVPIAV) traverse the membrane as a helical segment. R25 is a topological domain (cytoplasmic). A helical membrane pass occupies residues 26 to 46 (LGLGSVLGYLIAGCIIGPWGL). The Periplasmic portion of the chain corresponds to 47–53 (RLVTDAE). Residues 54-74 (SILHFAEIGVVLMLFIIGLEL) form a helical membrane-spanning segment. Topologically, residues 75–89 (DPQRLWKLRAAVFGG) are cytoplasmic. A helical transmembrane segment spans residues 90 to 110 (GALQMVICGGLLGLFCMLLGL). At 111–113 (RWQ) the chain is on the periplasmic side. Residues 114-134 (VAELIGMTLALSSTAIAMQAM) traverse the membrane as a helical segment. The Cytoplasmic segment spans residues 135–148 (NERNLMVTQMGRSA). Residues 149 to 169 (FAVLLFQDIAAIPLVAMIPLL) traverse the membrane as a helical segment. Residues 170–177 (AASSASTT) are Periplasmic-facing. Residues 178-198 (MGAFALSALKVAGALVLVVLL) form a helical membrane-spanning segment. Topologically, residues 199-213 (GRYVTRPALRFVARS) are cytoplasmic. The chain crosses the membrane as a helical span at residues 214–233 (GLREVFSAVALFLVFGFGLL). Over 234 to 236 (LEE) the chain is Periplasmic. The chain crosses the membrane as a helical span at residues 237–254 (VGLSMAMGAFLAGVLLAS). Residues 255–269 (SEYRHALESDIEPFK) lie on the Cytoplasmic side of the membrane. Residues 270–290 (GLLLGLFFIGVGMSIDFGTLI) form a helical membrane-spanning segment. Topologically, residues 291–293 (ENP) are periplasmic. A helical membrane pass occupies residues 294-314 (LRIVILLLGFLIIKIAMLWLI). Over 315–326 (ARPLQVPNKQRR) the chain is Cytoplasmic. The helical transmembrane segment at 327–347 (WFAVLLGQGSEFAFVVFGAAQ) threads the bilayer. Residues 348-358 (MANVLEPEWAK) are Periplasmic-facing. A helical membrane pass occupies residues 359-379 (SLTLAVALSMAATPILLVILN). The Cytoplasmic segment spans residues 380 to 620 (RLEQSSTEEA…ADEPETKPSS (241 aa)). Positions 399-518 (QPRVIIAGFG…AGVEKPERET (120 aa)) constitute an RCK N-terminal domain. Residues 597-620 (GWQGTEEGKHTGNMADEPETKPSS) are disordered.

Belongs to the monovalent cation:proton antiporter 2 (CPA2) transporter (TC 2.A.37) family. KefC subfamily. In terms of assembly, homodimer. Interacts with the regulatory subunit KefF.

It is found in the cell inner membrane. Pore-forming subunit of a potassium efflux system that confers protection against electrophiles. Catalyzes K(+)/H(+) antiport. The polypeptide is Glutathione-regulated potassium-efflux system protein KefC (Shigella flexneri).